The sequence spans 136 residues: Ribosome-binding factor A (136 aa).

It belongs to the RbfA family. As to quaternary structure, monomer. Binds 30S ribosomal subunits, but not 50S ribosomal subunits or 70S ribosomes.

It is found in the cytoplasm. Its function is as follows. One of several proteins that assist in the late maturation steps of the functional core of the 30S ribosomal subunit. Associates with free 30S ribosomal subunits (but not with 30S subunits that are part of 70S ribosomes or polysomes). Required for efficient processing of 16S rRNA. May interact with the 5'-terminal helix region of 16S rRNA. This Serratia proteamaculans (strain 568) protein is Ribosome-binding factor A.